The following is a 761-amino-acid chain: Nitrogen fixation protein FixI (761 aa).

Residues 1-120 lie on the Cytoplasmic side of the membrane; the sequence is MSCCTMDAES…SAPESDKTRN (120 aa). One can recognise an HMA domain in the interval 36-106; that stretch reads RQLDLSVSDV…EINSAGYRAH (71 aa). The a metal cation site is built by C47 and C50. Residues 121-142 traverse the membrane as a helical segment; it reads QLLLAIGVSGFAAPNIMLLSVS. Residues 143–155 are Extracellular-facing; it reads VWSGADAATRDMF. The helical transmembrane segment at 156-177 threads the bilayer; that stretch reads HWISAMIAAPALVYAGRFFFKS. The Cytoplasmic portion of the chain corresponds to 178–184; that stretch reads AWNALRH. A helical membrane pass occupies residues 185 to 205; it reads GRTNMDVPISVTVSLSYAVSL. The Extracellular segment spans residues 206-217; that stretch reads WETVHHGEHAWF. A helical membrane pass occupies residues 218–238; it reads DASVSLLFFLLIGRTLDHIMR. Topologically, residues 239-367 are cytoplasmic; that stretch reads EKARAAINGL…RARYRRIADR (129 aa). Residues 368–390 form a helical membrane-spanning segment; sequence AATLYSPVVHLLALVSFLAWGFL. Residues 391 to 395 are Extracellular-facing; that stretch reads GGDWK. The helical transmembrane segment at 396 to 415 threads the bilayer; the sequence is QAMLVAVAVLIITCPCALGL. At 416–691 the chain is on the cytoplasmic side; the sequence is AVPVVQVVAA…AVARRSASLI (276 aa). The 4-aspartylphosphate intermediate role is filled by D453. Mg(2+)-binding residues include D637 and D641. Residues 692-711 form a helical membrane-spanning segment; that stretch reads RQNFALAIGYNVLAVPIAIA. Residues 712 to 716 are Extracellular-facing; it reads GLATP. A helical membrane pass occupies residues 717-735; the sequence is LIAAVAMSTSSIIVVTNAL. At 736 to 761 the chain is on the cytoplasmic side; the sequence is RLNGFGKRPDMHIRRGIGRSAEVKAA.

This sequence belongs to the cation transport ATPase (P-type) (TC 3.A.3) family. Type IB subfamily.

Its subcellular location is the cell membrane. It catalyses the reaction ATP + H2O = ADP + phosphate + H(+). Its function is as follows. FixI is a pump of a specific cation involved in symbiotic nitrogen fixation. The four proteins FixG, FixH, FixI, and FixS may participate in a membrane-bound complex coupling the FixI cation pump with a redox process catalyzed by FixG. This is Nitrogen fixation protein FixI (fixI) from Rhizobium leguminosarum bv. viciae.